A 329-amino-acid polypeptide reads, in one-letter code: Holliday junction branch migration complex subunit RuvB (329 aa).

The segment at 1 to 180 (MKNILQSTEC…FGIPIHLEFY (180 aa)) is large ATPase domain (RuvB-L). Residues Arg-20, Gly-61, Lys-64, Thr-65, Thr-66, 127 to 129 (EDF), Arg-170, Tyr-180, and Arg-217 contribute to the ATP site. Position 65 (Thr-65) interacts with Mg(2+). The segment at 181 to 252 (STEELTKVIQ…FADKALLRLG (72 aa)) is small ATPAse domain (RuvB-S). The segment at 255–329 (KLGLDRQDIQ…ISHLREQEYI (75 aa)) is head domain (RuvB-H). Residues Arg-308 and Arg-313 each coordinate DNA.

The protein belongs to the RuvB family. As to quaternary structure, homohexamer. Forms an RuvA(8)-RuvB(12)-Holliday junction (HJ) complex. HJ DNA is sandwiched between 2 RuvA tetramers; dsDNA enters through RuvA and exits via RuvB. An RuvB hexamer assembles on each DNA strand where it exits the tetramer. Each RuvB hexamer is contacted by two RuvA subunits (via domain III) on 2 adjacent RuvB subunits; this complex drives branch migration. In the full resolvosome a probable DNA-RuvA(4)-RuvB(12)-RuvC(2) complex forms which resolves the HJ.

It localises to the cytoplasm. It carries out the reaction ATP + H2O = ADP + phosphate + H(+). Functionally, the RuvA-RuvB-RuvC complex processes Holliday junction (HJ) DNA during genetic recombination and DNA repair, while the RuvA-RuvB complex plays an important role in the rescue of blocked DNA replication forks via replication fork reversal (RFR). RuvA specifically binds to HJ cruciform DNA, conferring on it an open structure. The RuvB hexamer acts as an ATP-dependent pump, pulling dsDNA into and through the RuvAB complex. RuvB forms 2 homohexamers on either side of HJ DNA bound by 1 or 2 RuvA tetramers; 4 subunits per hexamer contact DNA at a time. Coordinated motions by a converter formed by DNA-disengaged RuvB subunits stimulates ATP hydrolysis and nucleotide exchange. Immobilization of the converter enables RuvB to convert the ATP-contained energy into a lever motion, pulling 2 nucleotides of DNA out of the RuvA tetramer per ATP hydrolyzed, thus driving DNA branch migration. The RuvB motors rotate together with the DNA substrate, which together with the progressing nucleotide cycle form the mechanistic basis for DNA recombination by continuous HJ branch migration. Branch migration allows RuvC to scan DNA until it finds its consensus sequence, where it cleaves and resolves cruciform DNA. The chain is Holliday junction branch migration complex subunit RuvB from Ehrlichia chaffeensis (strain ATCC CRL-10679 / Arkansas).